The sequence spans 34 residues: Photosystem II reaction center protein M (34 aa).

Residues 5-25 (ILAFIATALFILVPTAFLLII) traverse the membrane as a helical segment.

It belongs to the PsbM family. As to quaternary structure, PSII is composed of 1 copy each of membrane proteins PsbA, PsbB, PsbC, PsbD, PsbE, PsbF, PsbH, PsbI, PsbJ, PsbK, PsbL, PsbM, PsbT, PsbX, PsbY, PsbZ, Psb30/Ycf12, at least 3 peripheral proteins of the oxygen-evolving complex and a large number of cofactors. It forms dimeric complexes.

The protein localises to the plastid. It is found in the chloroplast thylakoid membrane. One of the components of the core complex of photosystem II (PSII). PSII is a light-driven water:plastoquinone oxidoreductase that uses light energy to abstract electrons from H(2)O, generating O(2) and a proton gradient subsequently used for ATP formation. It consists of a core antenna complex that captures photons, and an electron transfer chain that converts photonic excitation into a charge separation. This subunit is found at the monomer-monomer interface. In Ceratophyllum demersum (Rigid hornwort), this protein is Photosystem II reaction center protein M.